A 529-amino-acid chain; its full sequence is Bifunctional purine biosynthesis protein PurH (529 aa).

The MGS-like domain occupies 1 to 148; the sequence is MQQRRPVRRA…KNHKDVAIVV (148 aa).

It belongs to the PurH family.

It catalyses the reaction (6R)-10-formyltetrahydrofolate + 5-amino-1-(5-phospho-beta-D-ribosyl)imidazole-4-carboxamide = 5-formamido-1-(5-phospho-D-ribosyl)imidazole-4-carboxamide + (6S)-5,6,7,8-tetrahydrofolate. The catalysed reaction is IMP + H2O = 5-formamido-1-(5-phospho-D-ribosyl)imidazole-4-carboxamide. It participates in purine metabolism; IMP biosynthesis via de novo pathway; 5-formamido-1-(5-phospho-D-ribosyl)imidazole-4-carboxamide from 5-amino-1-(5-phospho-D-ribosyl)imidazole-4-carboxamide (10-formyl THF route): step 1/1. The protein operates within purine metabolism; IMP biosynthesis via de novo pathway; IMP from 5-formamido-1-(5-phospho-D-ribosyl)imidazole-4-carboxamide: step 1/1. The polypeptide is Bifunctional purine biosynthesis protein PurH (Klebsiella pneumoniae (strain 342)).